We begin with the raw amino-acid sequence, 201 residues long: Pyridoxal 5'-phosphate synthase subunit PdxT (201 aa).

49-51 provides a ligand contact to L-glutamine; the sequence is GES. Cys81 functions as the Nucleophile in the catalytic mechanism. Residues Arg110 and 139-140 contribute to the L-glutamine site; that span reads IR. Residues His175 and Glu177 each act as charge relay system in the active site.

This sequence belongs to the glutaminase PdxT/SNO family. In the presence of PdxS, forms a dodecamer of heterodimers. Only shows activity in the heterodimer.

It catalyses the reaction aldehydo-D-ribose 5-phosphate + D-glyceraldehyde 3-phosphate + L-glutamine = pyridoxal 5'-phosphate + L-glutamate + phosphate + 3 H2O + H(+). The catalysed reaction is L-glutamine + H2O = L-glutamate + NH4(+). It functions in the pathway cofactor biosynthesis; pyridoxal 5'-phosphate biosynthesis. Catalyzes the hydrolysis of glutamine to glutamate and ammonia as part of the biosynthesis of pyridoxal 5'-phosphate. The resulting ammonia molecule is channeled to the active site of PdxS. This chain is Pyridoxal 5'-phosphate synthase subunit PdxT, found in Streptomyces avermitilis (strain ATCC 31267 / DSM 46492 / JCM 5070 / NBRC 14893 / NCIMB 12804 / NRRL 8165 / MA-4680).